A 518-amino-acid polypeptide reads, in one-letter code: MGSKGAERRKQATPGQTPEGNVVMSFSFESYQLEEEDCQGKDISDKGVLALSEPAFEEAVPDDRYHGIYFAMLLAGVGFLLPYNSFITDVDYLHHKFEGTSIVFDMGLTYILVALVAVILNNVLVEMLSLHTRITVGYLFALGPLLFVTIFDVWLERFTIKQAYVINLMSMGTVAFGCTVQQSSFYGYMGMLPKRYTQGVMTGESTAGVIISLSRIFTKLLIKDERKNTIIFFVISICMVLVCFILHLLVRRTRFVQYYTSLARRGLSHAKDHSQHASQYQVHHDVITEEGNGAVGCSPAGDGCADFAGGNTYVRFDVPKPKMKRSWPGVKDMILHRYVVARVIWTYMLSIAVTYFITLCLFPGLESEIKNATLGEWLPILIMAIFNISDFVGKILAAVPYEWNGTRLLFFSCVRVVFIPLFIMCVYPAQMPMFSHPAWPCIFSLFMGITNGYFGSVPMIHAAGKVAPEQRELAGNIMTVSYMSGLMLGSVVAYAAYSFTASGSSFHSQTGYNFTQGY.

The segment covering 1-10 (MGSKGAERRK) has biased composition (basic and acidic residues). The tract at residues 1 to 21 (MGSKGAERRKQATPGQTPEGN) is disordered. Over 1–66 (MGSKGAERRK…EEAVPDDRYH (66 aa)) the chain is Extracellular. The helical transmembrane segment at 67–87 (GIYFAMLLAGVGFLLPYNSFI) threads the bilayer. Residues 88 to 99 (TDVDYLHHKFEG) are Cytoplasmic-facing. The chain crosses the membrane as a helical span at residues 100–120 (TSIVFDMGLTYILVALVAVIL). The Extracellular segment spans residues 121 to 133 (NNVLVEMLSLHTR). The helical transmembrane segment at 134 to 154 (ITVGYLFALGPLLFVTIFDVW) threads the bilayer. The Cytoplasmic segment spans residues 155–157 (LER). Residues 158 to 178 (FTIKQAYVINLMSMGTVAFGC) form a helical membrane-spanning segment. Residues 179–198 (TVQQSSFYGYMGMLPKRYTQ) are Extracellular-facing. The chain crosses the membrane as a helical span at residues 199–218 (GVMTGESTAGVIISLSRIFT). At 219 to 229 (KLLIKDERKNT) the chain is on the cytoplasmic side. A helical membrane pass occupies residues 230–250 (IIFFVISICMVLVCFILHLLV). The Extracellular portion of the chain corresponds to 251–342 (RRTRFVQYYT…MILHRYVVAR (92 aa)). The helical transmembrane segment at 343 to 363 (VIWTYMLSIAVTYFITLCLFP) threads the bilayer. Topologically, residues 364–376 (GLESEIKNATLGE) are cytoplasmic. Residues 377-397 (WLPILIMAIFNISDFVGKILA) traverse the membrane as a helical segment. The Extracellular portion of the chain corresponds to 398–407 (AVPYEWNGTR). A helical transmembrane segment spans residues 408-428 (LLFFSCVRVVFIPLFIMCVYP). The Cytoplasmic portion of the chain corresponds to 429-439 (AQMPMFSHPAW). Residues 440–460 (PCIFSLFMGITNGYFGSVPMI) form a helical membrane-spanning segment. Topologically, residues 461-476 (HAAGKVAPEQRELAGN) are extracellular. A helical membrane pass occupies residues 477 to 497 (IMTVSYMSGLMLGSVVAYAAY). Topologically, residues 498–518 (SFTASGSSFHSQTGYNFTQGY) are cytoplasmic.

Belongs to the SLC29A/ENT transporter (TC 2.A.57) family.

Its subcellular location is the membrane. Functionally, functions as a polyspecific organic cation transporter, efficiently transporting many organic cations such as monoamine neurotransmitters 1-methyl-4-phenylpyridinium and biogenic amines including serotonin, dopamine, norepinephrine and epinephrine. May play a role in regulating central nervous system homeostasis of monoamine neurotransmitters. May be involved in luminal transport of organic cations in the kidney and seems to use luminal proton gradient to drive organic cation reabsorption. Does not seem to transport nucleoside and nucleoside analogs such as uridine, cytidine, thymidine, adenosine, inosine, guanosine, and azidothymidine. The sequence is that of Equilibrative nucleoside transporter 4 (slc29a4) from Danio rerio (Zebrafish).